The following is a 182-amino-acid chain: Large ribosomal subunit protein bL17m (182 aa).

It belongs to the bacterial ribosomal protein bL17 family.

It is found in the mitochondrion. The polypeptide is Large ribosomal subunit protein bL17m (mrpl17) (Dictyostelium discoideum (Social amoeba)).